A 64-amino-acid polypeptide reads, in one-letter code: UPF0337 protein SH2043 (64 aa).

The disordered stretch occupies residues 1 to 64 (MAEDKFEQAK…DKVKGNNDNK (64 aa)). Over residues 22 to 64 (DNKDLEKEGQNDKASGKAKEAVENVKNKANDLIDKVKGNNDNK) the composition is skewed to basic and acidic residues.

The protein belongs to the UPF0337 (CsbD) family.

This is UPF0337 protein SH2043 from Staphylococcus haemolyticus (strain JCSC1435).